The chain runs to 232 residues: Large ribosomal subunit protein uL1 (232 aa).

Belongs to the universal ribosomal protein uL1 family. As to quaternary structure, part of the 50S ribosomal subunit.

Binds directly to 23S rRNA. The L1 stalk is quite mobile in the ribosome, and is involved in E site tRNA release. Its function is as follows. Protein L1 is also a translational repressor protein, it controls the translation of the L11 operon by binding to its mRNA. The sequence is that of Large ribosomal subunit protein uL1 from Cutibacterium acnes (strain DSM 16379 / KPA171202) (Propionibacterium acnes).